The sequence spans 219 residues: Ribose-5-phosphate isomerase A (219 aa).

Residues 28-31 (TGST), 81-84 (DGAD), and 94-97 (KGGG) each bind substrate. The Proton acceptor role is filled by glutamate 103. Lysine 121 contacts substrate.

This sequence belongs to the ribose 5-phosphate isomerase family. In terms of assembly, homodimer.

The catalysed reaction is aldehydo-D-ribose 5-phosphate = D-ribulose 5-phosphate. Its pathway is carbohydrate degradation; pentose phosphate pathway; D-ribose 5-phosphate from D-ribulose 5-phosphate (non-oxidative stage): step 1/1. In terms of biological role, catalyzes the reversible conversion of ribose-5-phosphate to ribulose 5-phosphate. The sequence is that of Ribose-5-phosphate isomerase A from Nitrosomonas europaea (strain ATCC 19718 / CIP 103999 / KCTC 2705 / NBRC 14298).